A 345-amino-acid chain; its full sequence is D-erythrose-4-phosphate dehydrogenase (345 aa).

11-12 contributes to the NAD(+) binding site; the sequence is RI. Residues 158-160, Arg-204, 217-218, and Arg-240 each bind substrate; these read SCT and TK. Residue Cys-159 is the Nucleophile of the active site. Asn-322 lines the NAD(+) pocket.

It belongs to the glyceraldehyde-3-phosphate dehydrogenase family. Epd subfamily. As to quaternary structure, homotetramer.

The protein resides in the cytoplasm. The enzyme catalyses D-erythrose 4-phosphate + NAD(+) + H2O = 4-phospho-D-erythronate + NADH + 2 H(+). It functions in the pathway cofactor biosynthesis; pyridoxine 5'-phosphate biosynthesis; pyridoxine 5'-phosphate from D-erythrose 4-phosphate: step 1/5. Its function is as follows. Catalyzes the NAD-dependent conversion of D-erythrose 4-phosphate to 4-phosphoerythronate. This chain is D-erythrose-4-phosphate dehydrogenase, found in Vibrio campbellii (strain ATCC BAA-1116).